Reading from the N-terminus, the 246-residue chain is Ribonuclease PH (246 aa).

The segment at 67–87 is disordered; the sequence is NMLPGSTSPRKRRDRSGKVDG. Phosphate-binding positions include arginine 88 and 126-128; that span reads GTR.

This sequence belongs to the RNase PH family. Homohexameric ring arranged as a trimer of dimers.

It carries out the reaction tRNA(n+1) + phosphate = tRNA(n) + a ribonucleoside 5'-diphosphate. Phosphorolytic 3'-5' exoribonuclease that plays an important role in tRNA 3'-end maturation. Removes nucleotide residues following the 3'-CCA terminus of tRNAs; can also add nucleotides to the ends of RNA molecules by using nucleoside diphosphates as substrates, but this may not be physiologically important. Probably plays a role in initiation of 16S rRNA degradation (leading to ribosome degradation) during starvation. The sequence is that of Ribonuclease PH from Rhodopirellula baltica (strain DSM 10527 / NCIMB 13988 / SH1).